The primary structure comprises 252 residues: Ditrans,polycis-undecaprenyl-diphosphate synthase ((2E,6E)-farnesyl-diphosphate specific) (252 aa).

Asp25 is a catalytic residue. Asp25 is a Mg(2+) binding site. Residues 26–29, Trp30, Arg38, His42, and 70–72 each bind substrate; these read GNGR and SSE. Asn73 functions as the Proton acceptor in the catalytic mechanism. Substrate is bound by residues Trp74, Arg76, and Arg193. Position 198 (His198) interacts with Mg(2+). 199–201 contributes to the substrate binding site; the sequence is RIS. Residue Glu212 coordinates Mg(2+).

The protein belongs to the UPP synthase family. In terms of assembly, homodimer. Mg(2+) serves as cofactor.

It carries out the reaction 8 isopentenyl diphosphate + (2E,6E)-farnesyl diphosphate = di-trans,octa-cis-undecaprenyl diphosphate + 8 diphosphate. Its function is as follows. Catalyzes the sequential condensation of isopentenyl diphosphate (IPP) with (2E,6E)-farnesyl diphosphate (E,E-FPP) to yield (2Z,6Z,10Z,14Z,18Z,22Z,26Z,30Z,34E,38E)-undecaprenyl diphosphate (di-trans,octa-cis-UPP). UPP is the precursor of glycosyl carrier lipid in the biosynthesis of bacterial cell wall polysaccharide components such as peptidoglycan and lipopolysaccharide. The chain is Ditrans,polycis-undecaprenyl-diphosphate synthase ((2E,6E)-farnesyl-diphosphate specific) from Salmonella typhi.